A 101-amino-acid chain; its full sequence is MARSICFFAVAILALMLFAAYETEAGTCKAECPTWEGICINKAPCVKCCKAQPEKFTDGHCSKILRRCLCTKPCATEEATATLANEVKTMAEALVEEDMME.

The signal sequence occupies residues 1-25; that stretch reads MARSICFFAVAILALMLFAAYETEA. Disulfide bonds link Cys28/Cys74, Cys32/Cys48, Cys39/Cys61, Cys45/Cys68, and Cys49/Cys70. The propeptide at 75–101 is removed in mature form; sequence ATEEATATLANEVKTMAEALVEEDMME.

Belongs to the DEFL family. Post-translationally, when compared to other plant defensins, the petunia defensins have an additional fifth disulfide bond. As to expression, petals.

The protein resides in the secreted. It localises to the vacuole. Its function is as follows. Plant defense peptide with antifungal activity against F.oxysporum and B.cinerea. The sequence is that of Floral defensin-like protein 2 (D2) from Petunia hybrida (Petunia).